The following is a 1875-amino-acid chain: Neuron navigator 1 (1875 aa).

Position 1 is an N-acetylmethionine (methionine 1). The segment at 1–63 is disordered; the sequence is MLGSSVKSVQ…GGSGSMAKAS (63 aa). 2 positions are modified to phosphoserine: serine 93 and serine 145. Disordered stretches follow at residues 115–230 and 280–339; these read SDDM…EERA and SSLR…VGGS. Threonine 162 is subject to Phosphothreonine. Phosphoserine occurs at positions 197 and 202. Positions 258–283 form a coiled coil; it reads ESQRKRTVQNVLDLRQNLEETMSSLR. Residues 280-291 show a composition bias toward polar residues; the sequence is SSLRGSQVTHSS. Residues serine 299, serine 311, serine 315, serine 365, and serine 394 each carry the phosphoserine modification. The span at 304-318 shows a compositional bias: low complexity; sequence PRSVSSLSNRSSPLS. Disordered regions lie at residues 391–463 and 477–783; these read GYMS…RTDS and SESE…AELP. Composition is skewed to low complexity over residues 414 to 428 and 436 to 456; these read DESSSISSGLSDASD and NASSSLNSLPTTPTASRRSST. Residues serine 455, serine 477, serine 479, and serine 493 each carry the phosphoserine modification. Residues 479–489 are compositionally biased toward basic and acidic residues; it reads SEEKTPKKLEY. The span at 506–522 shows a compositional bias: basic and acidic residues; that stretch reads ERPESCDDASKGGELKK. Serine 531 bears the Phosphoserine mark. Threonine 537 is modified (phosphothreonine). Residue serine 544 is modified to Phosphoserine. At threonine 547 the chain carries Phosphothreonine. The segment covering 558–569 has biased composition (basic and acidic residues); that stretch reads GKPEGKATDKGK. Residue threonine 575 is modified to Phosphothreonine. Basic and acidic residues predominate over residues 584-594; sequence AGRDRLSDAKK. Composition is skewed to polar residues over residues 618–638 and 648–658; these read GTATVMQTGSSATLSKIQKSS and RKTSLDVSNSV. Serine 651 carries the post-translational modification Phosphoserine. Arginine 690 carries the post-translational modification Omega-N-methylarginine. Polar residues-rich tracts occupy residues 696–712 and 726–735; these read VSSSIDPSLLSTKQGGL and GRSTPAPVNQ. Residues 733–758 adopt a coiled-coil conformation; that stretch reads VNQTDREKEKAKAKAVALDSDNISLK. Serine 752, serine 756, serine 762, serine 799, and serine 810 each carry phosphoserine. Over residues 753–772 the composition is skewed to polar residues; that stretch reads DNISLKSIGSPESTPKNQAS. 2 disordered regions span residues 800–840 and 893–982; these read LANL…PLPS and MSLP…SPPA. 2 stretches are compositionally biased toward low complexity: residues 807–818 and 893–902; these read NSNSLDLPSSSD and MSLPSAFPSS. Serine 998 bears the Phosphoserine mark. Threonine 1004 carries the phosphothreonine modification. Positions 1070-1161 form a coiled coil; sequence SSAEERMQSE…SEAQAVIQGA (92 aa). Threonine 1168 is modified (phosphothreonine). Disordered regions lie at residues 1172 to 1202, 1242 to 1306, 1359 to 1381, and 1808 to 1841; these read LRIKRQNSSDSISSLNSITSHSSIGSSKDAD, ATPD…KEVS, VAPGPSSGCTPGQVPGSSALSSP, and KLYHLPPPSVGPHSTASPPEDRTVKDSTPNSLDS. Serine 1179 is subject to Phosphoserine. The segment covering 1179–1198 has biased composition (low complexity); it reads SSDSISSLNSITSHSSIGSS. Positions 1244 to 1259 are enriched in polar residues; the sequence is PDSSAPSSPKLQHGST. Residues 1260–1281 are compositionally biased toward low complexity; that stretch reads ETASPSIKSSTSSSVGTEVTET. Serine 1263 carries the phosphoserine modification. The stretch at 1301 to 1360 forms a coiled coil; that stretch reads EKKEVSELRSELWEKEMKLTDIRLEALNSAHQLDQLRETMHNMQLEVDLLKAENDRLKVA. Over residues 1365 to 1381 the composition is skewed to polar residues; the sequence is SGCTPGQVPGSSALSSP. Serine 1380 bears the Phosphoserine mark.

This sequence belongs to the Nav/unc-53 family. In terms of assembly, interacts with tubulin. In terms of tissue distribution, expressed in heart and brain. Present in brain (at protein level). In adult brain, found almost exclusively in areas of secondary neurogenesis from the hippocampus and the subventricular zone.

Its subcellular location is the cytoplasm. The protein resides in the cytoskeleton. In terms of biological role, may be involved in neuronal migration. This is Neuron navigator 1 (Nav1) from Mus musculus (Mouse).